The chain runs to 285 residues: Dioxygenase andF (285 aa).

Fe cation contacts are provided by His-128, Asp-130, and His-205.

The protein belongs to the PhyH family. In terms of assembly, homodimer. Requires Fe cation as cofactor.

The protein operates within secondary metabolite biosynthesis; terpenoid biosynthesis. Functionally, dioxygenase; part of the gene cluster that mediates the biosynthesis of anditomin, a fungal meroterpenoid. The first step of the pathway is the synthesis of 3,5-dimethylorsellinic acid (DMOA) by the polyketide synthase andM. DMOA is then converted to the phthalide compound 5,7-dihydroxy-4,6-dimethylphthalide (DHDMP) by the cytochrome P450 monooxygenase andK, which is further prenylated by the prenyltransferase andD to yield farnesyl-DHDMP. Further epoxidation by the FAD-dependent monooxygenase andE leads to epoxyfarnesyl-DHDMP. The next step involves the terpene cyclase andB that converts epoxyfarnesyl-DHDMP into preandiloid A through opening of the epoxide ring followed by the cyclization of the farnesyl moiety. Preandiloid A is in turn oxidized at the C-3 hydroxyl group to yield preandiloid B by the dehydrogenase andC. The dioxygenase andA is solely responsible for the dehydrogenation of preandiloid B leading to the enone preandiloid C, as well as for the intriguing structural rearrangement to generate the bicyclo[2.2.2]octane core, transforming preandiloid C into andiconin. FAD-binding monooxygenase andJ then produces andilesin D which is reduced by dehydrogenase andI to yield andilesin A. Action of acetyltransferase andG followed by a spontaneous acetate elimination leads then to andilesin B, which is in turn substrate of the short chain dehydrogenase andH to yield andilesin C. Finally, the dioxygenase andF catalyzes the transformation of andilesin C to anditomin. This chain is Dioxygenase andF, found in Emericella variicolor (Aspergillus stellatus).